The chain runs to 271 residues: Probable esterase D14L (271 aa).

The Nucleophile role is filled by Ser96. Active-site residues include Asp218 and His247.

It belongs to the AB hydrolase superfamily. Component of an intracellular receptor complex involved in the detection of the smoke compound karrikin. Expressed constitutively in all organs (e.g. roots, stems, leaves, panicles and embryos).

It localises to the nucleus. The protein resides in the cytoplasm. Functionally, may be involved in strigolactone signaling pathway. Essential for plant responses to karrikins, a class of butenolide compounds, structurally similar to strigolactones, released from burning vegetation that stimulate seed germination and enhance seedling photomorphogenesis. Mediates a specific perception of karrikin. Required for the establishment of symbiosis with the arbuscular mycorrhizal fungi (AMF) Rhizophagus irregularis and Gigaspora rosea. Karrikin binding induces a conformational change. The protein is Probable esterase D14L (D14L) of Oryza sativa subsp. japonica (Rice).